The following is a 170-amino-acid chain: Thialysine N-epsilon-acetyltransferase (170 aa).

Residues 4–166 form the N-acetyltransferase domain; sequence VLIREAKEGD…FRFEGEAMRE (163 aa). 27 to 28 contacts substrate; that stretch reads YE. Lys29 is modified (N6-acetyllysine). Residue Glu92 participates in substrate binding. Acetyl-CoA-binding positions include 94–96, 102–107, 133–135, and Tyr140; these read IYV, GQGIGS, and NKK. The active-site Proton donor is the Tyr140. Glu152 is a binding site for substrate.

Belongs to the acetyltransferase family. In terms of assembly, homodimer.

It is found in the cytoplasm. It catalyses the reaction S-(2-aminoethyl)-L-cysteine + acetyl-CoA = S-(2-acetamidoethyl)-L-cysteine + CoA + H(+). It carries out the reaction an alkane-alpha,omega-diamine + acetyl-CoA = an N-acetylalkane-alpha,omega-diamine + CoA + H(+). In terms of biological role, catalyzes the N-acetylation of the amino acid thialysine (S-(2-aminoethyl)-L-cysteine), a L-lysine analog with the 4-methylene group substituted with a sulfur. May also catalyze acetylation of polyamines, such as norspermidine, spermidine or spermine. However, ability to acetylate polyamines is weak, suggesting that it does not act as a diamine acetyltransferase in vivo. This chain is Thialysine N-epsilon-acetyltransferase, found in Sus scrofa (Pig).